Reading from the N-terminus, the 267-residue chain is tRNA pseudouridine synthase A (267 aa).

Catalysis depends on D55, which acts as the Nucleophile. Position 111 (Y111) interacts with substrate.

The protein belongs to the tRNA pseudouridine synthase TruA family.

It carries out the reaction uridine(38/39/40) in tRNA = pseudouridine(38/39/40) in tRNA. Functionally, formation of pseudouridine at positions 38, 39 and 40 in the anticodon stem and loop of transfer RNAs. The chain is tRNA pseudouridine synthase A from Thermococcus onnurineus (strain NA1).